A 259-amino-acid chain; its full sequence is Thiazole synthase (259 aa).

Lys-99 functions as the Schiff-base intermediate with DXP in the catalytic mechanism. 1-deoxy-D-xylulose 5-phosphate-binding positions include Gly-161, 187–188 (AG), and 209–210 (NT).

The protein belongs to the ThiG family. In terms of assembly, homotetramer. Forms heterodimers with either ThiH or ThiS.

The protein localises to the cytoplasm. The enzyme catalyses [ThiS sulfur-carrier protein]-C-terminal-Gly-aminoethanethioate + 2-iminoacetate + 1-deoxy-D-xylulose 5-phosphate = [ThiS sulfur-carrier protein]-C-terminal Gly-Gly + 2-[(2R,5Z)-2-carboxy-4-methylthiazol-5(2H)-ylidene]ethyl phosphate + 2 H2O + H(+). It participates in cofactor biosynthesis; thiamine diphosphate biosynthesis. In terms of biological role, catalyzes the rearrangement of 1-deoxy-D-xylulose 5-phosphate (DXP) to produce the thiazole phosphate moiety of thiamine. Sulfur is provided by the thiocarboxylate moiety of the carrier protein ThiS. In vitro, sulfur can be provided by H(2)S. This is Thiazole synthase from Sulfurimonas denitrificans (strain ATCC 33889 / DSM 1251) (Thiomicrospira denitrificans (strain ATCC 33889 / DSM 1251)).